A 24-amino-acid chain; its full sequence is Small ribosomal subunit protein uS19 (24 aa).

Residues 1-24 (KLGEFSPTRTYRGHNKKDKKMQKK) form a disordered region. The span at 11-24 (YRGHNKKDKKMQKK) shows a compositional bias: basic residues.

This sequence belongs to the universal ribosomal protein uS19 family.

Its function is as follows. Protein S19 forms a complex with S13 that binds strongly to the 16S ribosomal RNA. The polypeptide is Small ribosomal subunit protein uS19 (Phytoplasma sp. (strain STRAWB2)).